Reading from the N-terminus, the 143-residue chain is uncharacterized protein (143 aa).

Residues 4 to 24 (FGIVALSIICSIAFLFVAYGV) form a helical membrane-spanning segment. The tract at residues 97 to 143 (TVPFVNTEAPPPRLSSSFSRQSGENAETQSQVSASPFNDKNSPYVQE) is disordered. Positions 110-143 (LSSSFSRQSGENAETQSQVSASPFNDKNSPYVQE) are enriched in polar residues.

It is found in the golgi apparatus membrane. This is an uncharacterized protein from Schizosaccharomyces pombe (strain 972 / ATCC 24843) (Fission yeast).